The primary structure comprises 299 residues: Circadian clock oscillator protein KaiA (299 aa).

Residues 1-169 (MVSKLSLYLV…RLAEKLRERL (169 aa)) form the KaiA N-terminal domain. The interval 3 to 135 (SKLSLYLVTP…LHLAPSCALS (133 aa)) is psR domain, binds oxidized quinones. Positions 170–178 (GYLGVYYKR) are flexible linker. Residues 179-287 (NPKYFYRSLS…CEMYRRSIPR (109 aa)) form the KaiA C-terminal domain.

In terms of assembly, homodimer. The KaiABC complex composition changes during the circadian cycle to control KaiC phosphorylation. Complexes KaiC(6), KaiA(2-4):KaiC(6), KaiB(6):KaiC(6) and KaiC(6):KaiB(6):KaiA(12) are among the most important forms, many form cooperatively. KaiA and CikA bind to the same region of the KaiB(fs) form and therefore compete.

Key component of the KaiABC oscillator complex, which constitutes the main circadian regulator in cyanobacteria. Complex composition changes during the circadian cycle to control KaiC phosphorylation. KaiA stimulates KaiC autophosphorylation, while KaiB sequesters KaiA, leading to KaiC autodephosphorylation. KaiA binding to the KaiC CII domain during the subjective day yields KaiA(2-4):KaiC(6) complexes which stimulate KaiC autophosphorylation. Phospho-Ser-431 KaiC accumulation triggers binding of KaiB during the subjective night to form the KaiB(6):KaiC(6) complex, leading to changes in the output regulators CikA and SasA. KaiB(6):KaiC(6) formation exposes a site for KaiA binding on KaiB that sequesters KaiA from KaiC's CII domain, making the KaiC(6):KaiB(6):KaiA(12) complex resulting in KaiC autodephosphorylation. Complete dephosphorylation of KaiC leads to dissociation of KaiA(2):KaiB(1), completing 1 cycle of the Kai oscillator. In terms of biological role, binds oxidized quinones via the N-terminal PsR domain, allowing it to sense redox changes and possibly mediate clock input. The chain is Circadian clock oscillator protein KaiA from Picosynechococcus sp. (strain ATCC 27264 / PCC 7002 / PR-6) (Agmenellum quadruplicatum).